Reading from the N-terminus, the 213-residue chain is Chloramphenicol acetyltransferase 3 (213 aa).

The Proton acceptor role is filled by H189.

This sequence belongs to the chloramphenicol acetyltransferase family. Homotrimer.

It carries out the reaction chloramphenicol + acetyl-CoA = chloramphenicol 3-acetate + CoA. Its function is as follows. This enzyme is an effector of chloramphenicol resistance in bacteria. The sequence is that of Chloramphenicol acetyltransferase 3 (cat3) from Escherichia coli.